The chain runs to 621 residues: Probable bifunctional dTTP/UTP pyrophosphatase/methyltransferase protein (621 aa).

An MAF-like region spans residues 11–223 (LHKRVVLASA…PPRPEDLRRS (213 aa)). Ser-21 is modified (phosphoserine). The Proton acceptor; for pyrophosphatase activity role is filled by Asp-88. Ser-228 is modified (phosphoserine). Residue Thr-234 is modified to Phosphothreonine. A disordered region spans residues 235–279 (FEDLSDVEGGGSEPTQRDAGSRDEKAEAGEAGQATAEAECHRTRE). Ser-239 is subject to Phosphoserine. Basic and acidic residues predominate over residues 249–262 (TQRDAGSRDEKAEA). Residues 277-621 (TRETLPPFPT…DAILATKVAP (345 aa)) form an ASMT-like region. Position 421 is a phosphoserine (Ser-421). S-adenosyl-L-methionine contacts are provided by residues Asp-482, 508–510 (GDF), and Arg-525.

It in the N-terminal section; belongs to the Maf family. YhdE subfamily. This sequence in the C-terminal section; belongs to the class I-like SAM-binding methyltransferase superfamily. Cation-independent O-methyltransferase family. In terms of assembly, homodimer. The cofactor is a divalent metal cation. In terms of tissue distribution, widely expressed. In adult, highly expressed in pancreas, placenta, fibroblast, thymus, prostate, testis, ovary and colon. Expressed at lower levels in spleen, small intestine and leukocytes. In fetus, expressed at high levels in the lung and kidney and at lower level in brain and liver.

The enzyme catalyses dTTP + H2O = dTMP + diphosphate + H(+). It carries out the reaction UTP + H2O = UMP + diphosphate + H(+). The catalysed reaction is CTP + H2O = CMP + diphosphate + H(+). It catalyses the reaction psi-UTP + H2O = psi-UMP + diphosphate + H(+). The enzyme catalyses 5-methyl-UTP + H2O = 5-methyl-UMP + diphosphate + H(+). It carries out the reaction 5-methyl-CTP + H2O = 5-methyl-CMP + diphosphate + H(+). Nucleoside triphosphate pyrophosphatase that hydrolyzes dTTP and UTP. Can also hydrolyze CTP and the modified nucleotides pseudo-UTP, 5-methyl-UTP (m(5)UTP) and 5-methyl-CTP (m(5)CTP). Has weak activity with dCTP, 8-oxo-GTP and N(4)-methyl-dCTP. May have a dual role in cell division arrest and in preventing the incorporation of modified nucleotides into cellular nucleic acids. In addition, the presence of the putative catalytic domain of S-adenosyl-L-methionine binding in the C-terminal region argues for a methyltransferase activity. This is Probable bifunctional dTTP/UTP pyrophosphatase/methyltransferase protein (ASMTL) from Homo sapiens (Human).